A 593-amino-acid chain; its full sequence is NADH-quinone oxidoreductase subunit C/D (593 aa).

Residues Met-1–Gln-184 form an NADH dehydrogenase I subunit C region. The interval Asp-208–Arg-593 is NADH dehydrogenase I subunit D.

The protein in the N-terminal section; belongs to the complex I 30 kDa subunit family. In the C-terminal section; belongs to the complex I 49 kDa subunit family. As to quaternary structure, NDH-1 is composed of 13 different subunits. Subunits NuoB, CD, E, F, and G constitute the peripheral sector of the complex.

Its subcellular location is the cell inner membrane. It catalyses the reaction a quinone + NADH + 5 H(+)(in) = a quinol + NAD(+) + 4 H(+)(out). In terms of biological role, NDH-1 shuttles electrons from NADH, via FMN and iron-sulfur (Fe-S) centers, to quinones in the respiratory chain. The immediate electron acceptor for the enzyme in this species is believed to be ubiquinone. Couples the redox reaction to proton translocation (for every two electrons transferred, four hydrogen ions are translocated across the cytoplasmic membrane), and thus conserves the redox energy in a proton gradient. This is NADH-quinone oxidoreductase subunit C/D from Pseudomonas putida (strain GB-1).